Consider the following 837-residue polypeptide: Tuftelin-interacting protein 11 (837 aa).

Composition is skewed to basic and acidic residues over residues 1 to 13 (MSLSHLYRDGEGR) and 53 to 64 (VWAERDSDDERP). Disordered regions lie at residues 1 to 21 (MSLSHLYRDGEGRIDDDDDER), 53 to 72 (VWAERDSDDERPSFGGKRAR), and 85 to 133 (LKKG…KGFA). The segment at 1-50 (MSLSHLYRDGEGRIDDDDDERENFEITDWDLQNEFNPNRQRHWQTKEEAT) is required for interaction with DHX15. Residues Ser2, Ser59, and Ser98 each carry the phosphoserine modification. Over residues 91–102 (EEAELEDSDDEE) the composition is skewed to acidic residues. The span at 103–116 (RPVKQDDFPKDFGP) shows a compositional bias: basic and acidic residues. Ser144 carries the phosphoserine modification. The 47-residue stretch at 149 to 195 (TKGIGQKLLQKMGYVPGRGLGKNAQGIINPIEAKQRKGKGAVGAYGS) folds into the G-patch domain. The tract at residues 179–236 (IEAKQRKGKGAVGAYGSERTTQSMQDFPVVDSEEEAEEEFQKELSQWRKDPSGSKKKP) is disordered. Position 210 is a phosphoserine (Ser210). Basic and acidic residues predominate over residues 217 to 231 (EFQKELSQWRKDPSG). The Nuclear localization signal signature appears at 700-705 (VKDKFN). A required for nuclear speckle localization region spans residues 710-734 (IMNRAVSSNVGAYMQPGARENIAYL).

It belongs to the TFP11/STIP family. Identified in the spliceosome C complex. Found in the Intron Large (IL) complex, a post-mRNA release spliceosomal complex containing the excised intron, U2, U5 and U6 snRNPs, and splicing factors. Interacts with TUFT1. Interacts with DHX15; indicative for a recruitment of DHX15 to the IL complex. Interacts with GCFC2.

The protein localises to the cytoplasm. It is found in the nucleus. In terms of biological role, involved in pre-mRNA splicing, specifically in spliceosome disassembly during late-stage splicing events. Intron turnover seems to proceed through reactions in two lariat-intron associated complexes termed Intron Large (IL) and Intron Small (IS). In cooperation with DHX15 seems to mediate the transition of the U2, U5 and U6 snRNP-containing IL complex to the snRNP-free IS complex leading to efficient debranching and turnover of excised introns. May play a role in the differentiation of ameloblasts and odontoblasts or in the forming of the enamel extracellular matrix. This is Tuftelin-interacting protein 11 (TFIP11) from Macaca mulatta (Rhesus macaque).